The chain runs to 483 residues: Nuc-1 negative regulatory protein preg (483 aa).

Low complexity-rich tracts occupy residues 1-32 (MLTR…PRPS), 60-80 (SSRR…PISI), and 176-200 (ASAL…AVAV). Disordered regions lie at residues 1–112 (MLTR…SRPQ), 164–234 (NTVG…SQGD), and 434–483 (CPEP…RHAT). Residues 435–473 (PEPEEADDEDEDEELDESDAIGDDDDDIDGEGGEREEET) show a composition bias toward acidic residues.

This sequence belongs to the cyclin family.

Its function is as follows. Negative regulator, together with pgov, of the transcriptional activator nuc-1, which controls the expression of phosphorous acquisition enzymes. This Neurospora crassa (strain ATCC 24698 / 74-OR23-1A / CBS 708.71 / DSM 1257 / FGSC 987) protein is Nuc-1 negative regulatory protein preg (preg).